A 630-amino-acid polypeptide reads, in one-letter code: DNA mismatch repair protein MutL (630 aa).

It belongs to the DNA mismatch repair MutL/HexB family.

This protein is involved in the repair of mismatches in DNA. It is required for dam-dependent methyl-directed DNA mismatch repair. May act as a 'molecular matchmaker', a protein that promotes the formation of a stable complex between two or more DNA-binding proteins in an ATP-dependent manner without itself being part of a final effector complex. The chain is DNA mismatch repair protein MutL from Lactobacillus johnsonii (strain CNCM I-12250 / La1 / NCC 533).